A 263-amino-acid chain; its full sequence is Acyl-[acyl-carrier-protein]--UDP-N-acetylglucosamine O-acyltransferase (263 aa).

It belongs to the transferase hexapeptide repeat family. LpxA subfamily. In terms of assembly, homotrimer.

It is found in the cytoplasm. It carries out the reaction a (3R)-hydroxyacyl-[ACP] + UDP-N-acetyl-alpha-D-glucosamine = a UDP-3-O-[(3R)-3-hydroxyacyl]-N-acetyl-alpha-D-glucosamine + holo-[ACP]. It functions in the pathway glycolipid biosynthesis; lipid IV(A) biosynthesis; lipid IV(A) from (3R)-3-hydroxytetradecanoyl-[acyl-carrier-protein] and UDP-N-acetyl-alpha-D-glucosamine: step 1/6. Involved in the biosynthesis of lipid A, a phosphorylated glycolipid that anchors the lipopolysaccharide to the outer membrane of the cell. This Campylobacter lari (strain RM2100 / D67 / ATCC BAA-1060) protein is Acyl-[acyl-carrier-protein]--UDP-N-acetylglucosamine O-acyltransferase.